The following is a 201-amino-acid chain: Large ribosomal subunit protein uL4 (201 aa).

The segment at 43–69 (TKAQKGRSDVSGGGAKPWKQKGSGRAR) is disordered.

This sequence belongs to the universal ribosomal protein uL4 family. In terms of assembly, part of the 50S ribosomal subunit.

In terms of biological role, one of the primary rRNA binding proteins, this protein initially binds near the 5'-end of the 23S rRNA. It is important during the early stages of 50S assembly. It makes multiple contacts with different domains of the 23S rRNA in the assembled 50S subunit and ribosome. Its function is as follows. Forms part of the polypeptide exit tunnel. The polypeptide is Large ribosomal subunit protein uL4 (Thioalkalivibrio sulfidiphilus (strain HL-EbGR7)).